Reading from the N-terminus, the 256-residue chain is Acetyl-coenzyme A carboxylase carboxyl transferase subunit beta 2 (256 aa).

The region spanning 1–256 is the CoA carboxyltransferase N-terminal domain; that stretch reads MTVKCNKCKE…LAIHAETVSA (256 aa). 4 residues coordinate Zn(2+): Cys-5, Cys-8, Cys-24, and Cys-27. A C4-type zinc finger spans residues 5-27; the sequence is CNKCKEEINKEDLEKNYYICPLC.

Belongs to the AccD/PCCB family. As to quaternary structure, acetyl-CoA carboxylase is a heterohexamer composed of biotin carboxyl carrier protein (AccB), biotin carboxylase (AccC) and two subunits each of ACCase subunit alpha (AccA) and ACCase subunit beta (AccD). The cofactor is Zn(2+).

The protein localises to the cytoplasm. It carries out the reaction N(6)-carboxybiotinyl-L-lysyl-[protein] + acetyl-CoA = N(6)-biotinyl-L-lysyl-[protein] + malonyl-CoA. The protein operates within lipid metabolism; malonyl-CoA biosynthesis; malonyl-CoA from acetyl-CoA: step 1/1. Functionally, component of the acetyl coenzyme A carboxylase (ACC) complex. Biotin carboxylase (BC) catalyzes the carboxylation of biotin on its carrier protein (BCCP) and then the CO(2) group is transferred by the transcarboxylase to acetyl-CoA to form malonyl-CoA. The protein is Acetyl-coenzyme A carboxylase carboxyl transferase subunit beta 2 of Lachnospira eligens (strain ATCC 27750 / DSM 3376 / VPI C15-48 / C15-B4) (Eubacterium eligens).